The following is an 810-amino-acid chain: Volume-regulated anion channel subunit LRRC8A (810 aa).

N-acetylmethionine is present on Met-1. Residues 1–22 lie on the Cytoplasmic side of the membrane; the sequence is MIPVTELRYFADTQPAYRILKP. Residues 23 to 47 form a helical membrane-spanning segment; that stretch reads WWDVFTDYISIVMLMIAVFGGTLQV. At 48 to 123 the chain is on the extracellular side; that stretch reads TQDKMICLPC…YENRLHWFAK (76 aa). 3 cysteine pairs are disulfide-bonded: Cys-54–Cys-310, Cys-57–Cys-65, and Cys-113–Cys-295. Residues Asn-66 and Asn-83 are each glycosylated (N-linked (GlcNAc...) asparagine). Residues 124-142 traverse the membrane as a helical segment; the sequence is YFPYLVLLHTLIFLACSNF. Residues 143-264 are Cytoplasmic-facing; the sequence is WFKFPRTSSK…EEGDIVYRLY (122 aa). At Thr-200 the chain carries Phosphothreonine. Ser-202 bears the Phosphoserine mark. Position 215 is a phosphothreonine (Thr-215). Position 217 is a phosphoserine (Ser-217). Residues 265–286 form a helical membrane-spanning segment; the sequence is MRQTIIKVIKFFLIICYTVYYV. The Extracellular segment spans residues 287–316; it reads HNIKFDVDCTVDIESLTGYRTYRCAHPLAT. The helical transmembrane segment at 317-341 threads the bilayer; sequence LFKILASFYISLVIFYGLICMYTLW. Residues 342 to 810 lie on the Cytoplasmic side of the membrane; it reads WMLRRSLKKY…RLWRADKEQA (469 aa). LRR repeat units lie at residues 399–422, 423–445, 447–468, 469–492, 493–515, 518–542, 543–565, 567–589, 590–613, 614–637, 639–661, 662–684, 686–707, 708–730, 732–753, 754–776, and 778–801; these read ENKL…RLTK, NAQD…VFDL, ELEV…IAQL, TGLK…AFLR, ENLR…IYSL, LEEL…GLRE, LKRL…VTDV, VHLQ…SLKK, MVNL…IFSL, HNLQ…SFQH, HRLT…IGNL, TNLE…LFYC, KLRY…IGLL, QNLQ…LFQC, KLRA…VGEL, TNLT…LGEC, and LLKR…VKER. The Di-leucine motif motif lies at 706–707; sequence LL.

Belongs to the LRRC8 family. As to quaternary structure, heterohexamer; oligomerizes with other LRRC8 proteins (LRRC8B, LRRC8C, LRRC8D and/or LRRC8E) to form a heterohexamer. Can form homohexamers in vitro, but these have lower conductance than heterohexamers. Detected in a channel complex that contains LRRC8A, LRRC8C and LRRC8E. In vivo, the subunit composition may depend primarily on expression levels, and heterooligomeric channels containing various proportions of the different LRRC8 proteins may coexist. Interact with GRB2. Interacts with NOX4; this interaction prevents the ubiquitin-mediated degradation of LRRC8A. Post-translationally, N-glycosylated.

Its subcellular location is the cell membrane. It localises to the lysosome membrane. It carries out the reaction chloride(in) = chloride(out). The enzyme catalyses iodide(out) = iodide(in). The catalysed reaction is taurine(out) = taurine(in). It catalyses the reaction L-aspartate(out) = L-aspartate(in). It carries out the reaction L-glutamate(out) = L-glutamate(in). The enzyme catalyses myo-inositol(out) = myo-inositol(in). The catalysed reaction is 2',3'-cGAMP(out) = 2',3'-cGAMP(in). With respect to regulation, inhibited by (4-[(2-butyl-6,7-dichloro-2-cyclopentyl-2,3-dihydro-1-oxo-1H-inden-5-yl)oxy]butanoic acid), which plugs the channel like a cork in a bottle by binding in the extracellular selectivity filter and sterically occluding ion conduction. Lipids may block conduction in closed heterohexameric channels. Essential component of the volume-regulated anion channel (VRAC, also named VSOAC channel), an anion channel required to maintain a constant cell volume in response to extracellular or intracellular osmotic changes. The VRAC channel conducts iodide better than chloride and can also conduct organic osmolytes like taurine. Mediates efflux of amino acids, such as aspartate and glutamate, in response to osmotic stress. In complex with LRRC8C or LRRC8E, acts as a transporter of immunoreactive cyclic dinucleotide GMP-AMP (2'-3'-cGAMP), an immune messenger produced in response to DNA virus in the cytosol: mediates both import and export of 2'-3'-cGAMP, thereby promoting transfer of 2'-3'-cGAMP to bystander cells. In contrast, complexes containing LRRC8D inhibit transport of 2'-3'-cGAMP. Required for in vivo channel activity, together with at least one other family member (LRRC8B, LRRC8C, LRRC8D or LRRC8E); channel characteristics depend on the precise subunit composition. Can form functional channels by itself (in vitro). Involved in B-cell development: required for the pro-B cell to pre-B cell transition. Also required for T-cell development. Required for myoblast differentiation: VRAC activity promotes membrane hyperpolarization and regulates insulin-stimulated glucose metabolism and oxygen consumption. Also acts as a regulator of glucose-sensing in pancreatic beta cells: VRAC currents, generated in response to hypotonicity- or glucose-induced beta cell swelling, depolarize cells, thereby causing electrical excitation, leading to increase glucose sensitivity and insulin secretion. Also plays a role in lysosome homeostasis by forming functional lysosomal VRAC channels in response to low cytoplasmic ionic strength condition: lysosomal VRAC channels are necessary for the formation of large lysosome-derived vacuoles, which store and then expel excess water to maintain cytosolic water homeostasis. Acts as a key factor in NLRP3 inflammasome activation by modulating itaconate efflux and mitochondria function. In Rattus norvegicus (Rat), this protein is Volume-regulated anion channel subunit LRRC8A.